A 402-amino-acid polypeptide reads, in one-letter code: Putative epoxide hydrolase AFT8 (402 aa).

It belongs to the peptidase S33 family.

It participates in mycotoxin biosynthesis. Its function is as follows. Putative epoxide hydrolase; part of the gene clusters that mediate the biosynthesis of the host-selective toxins (HSTs) AF-toxins responsible for Alternaria black spot of strawberry disease by the strawberry pathotype. AF-toxin I and III are valine derivatives of 2,3-dyhydroxy-isovaleric acid and 2-hydroxy-isovaleric acid respectively, while AF II is an isoleucine derivative of 2-hydroxy-valeric acid. These derivatives are bound to a 9,10-epoxy-8-hydroxy-9-methyl-decatrienoic acid (EDA) moiety. On cellular level, AF-toxins affect plasma membrane of susceptible cells and cause a sudden increase in loss of K(+) after a few minutes of toxin treatment. The aldo-keto reductase AFTS1 catalyzes the conversion of 2-keto-isovaleric acid (2-KIV) to 2-hydroxy-isovaleric acid (2-HIV) by reduction of its ketone to an alcohol. The acyl-CoA ligase AFT1, the hydrolase AFT2 and the enoyl-CoA hydratases AFT3 and AFT6, but also the polyketide synthase AFT9, the acyl-CoA dehydrogenase AFT10, the cytochrome P450 monooxygenase AFT11 and the oxidoreductase AFT12 are all involved in the biosynthesis of the AK-, AF- and ACT-toxin common EDA structural moiety. The exact function of each enzyme, and of additional enzymes identified within the AF-toxin clusters have still to be determined. This Alternaria alternata (Alternaria rot fungus) protein is Putative epoxide hydrolase AFT8.